A 225-amino-acid chain; its full sequence is MGNSITVKRKRAKVMKIDGETFRIKTPVTAREVTADYPGYVLLDSQAVKHFGVRSKPLEPNQTLKPKKTYFLVELPKLPPETTAVDTENKLPYRRVMSGIHVGAKERLDMLMLSRRTVSDVTIGRSDGGDGFGPELGPGHTSVRLRLPRSQITKLMEENNNDASAIAEKILGIYMERSGELGGGRGGVDGRRELGSGEIKAREKQVSFAGEGGRELPVLWSRSGK.

This is an uncharacterized protein from Arabidopsis thaliana (Mouse-ear cress).